A 172-amino-acid chain; its full sequence is Large ribosomal subunit protein uL10 (172 aa).

It belongs to the universal ribosomal protein uL10 family. As to quaternary structure, part of the ribosomal stalk of the 50S ribosomal subunit. The N-terminus interacts with L11 and the large rRNA to form the base of the stalk. The C-terminus forms an elongated spine to which L12 dimers bind in a sequential fashion forming a multimeric L10(L12)X complex.

In terms of biological role, forms part of the ribosomal stalk, playing a central role in the interaction of the ribosome with GTP-bound translation factors. The sequence is that of Large ribosomal subunit protein uL10 from Brucella abortus (strain S19).